Consider the following 428-residue polypeptide: Phosphomethylpyrimidine synthase 1 (428 aa).

Residues N65, M94, Y123, H158, 180-182 (SRG), 221-224 (DGMR), and E260 each bind substrate. Zn(2+) is bound at residue H264. Residue Y287 coordinates substrate. H328 contacts Zn(2+). [4Fe-4S] cluster contacts are provided by C405, C408, and C412.

This sequence belongs to the ThiC family. [4Fe-4S] cluster is required as a cofactor.

It carries out the reaction 5-amino-1-(5-phospho-beta-D-ribosyl)imidazole + S-adenosyl-L-methionine = 4-amino-2-methyl-5-(phosphooxymethyl)pyrimidine + CO + 5'-deoxyadenosine + formate + L-methionine + 3 H(+). It participates in cofactor biosynthesis; thiamine diphosphate biosynthesis. Catalyzes the synthesis of the hydroxymethylpyrimidine phosphate (HMP-P) moiety of thiamine from aminoimidazole ribotide (AIR) in a radical S-adenosyl-L-methionine (SAM)-dependent reaction. This Methanosarcina mazei (strain ATCC BAA-159 / DSM 3647 / Goe1 / Go1 / JCM 11833 / OCM 88) (Methanosarcina frisia) protein is Phosphomethylpyrimidine synthase 1.